The chain runs to 458 residues: Smoothelin-like protein 2 (458 aa).

Residues leucine 24–threonine 88 are a coiled coil. Disordered regions lie at residues threonine 87–arginine 111, phenylalanine 123–glutamate 142, and isoleucine 151–alanine 312. Over residues proline 94–glycine 104 the composition is skewed to pro residues. Position 96 is a phosphothreonine (threonine 96). A phosphoserine mark is found at serine 98, serine 126, and serine 131. Over residues serine 131–glutamate 142 the composition is skewed to basic and acidic residues. 2 stretches are compositionally biased toward low complexity: residues proline 158–proline 167 and threonine 209–alanine 220. Positions leucine 225–asparagine 244 are enriched in polar residues. The span at serine 245 to serine 254 shows a compositional bias: low complexity. Phosphoserine is present on residues serine 252, serine 254, and serine 267. Positions leucine 270–proline 283 are enriched in pro residues. Threonine 272 is modified (phosphothreonine). Serine 276 carries the phosphoserine modification. Basic and acidic residues predominate over residues arginine 290–valine 299. Positions arginine 300–alanine 310 are enriched in polar residues. Serine 341 is modified (phosphoserine). Residues serine 348–arginine 455 enclose the Calponin-homology (CH) domain.

The protein belongs to the smoothelin family.

This is Smoothelin-like protein 2 (SMTNL2) from Bos taurus (Bovine).